The sequence spans 339 residues: Tetraacyldisaccharide 4'-kinase (339 aa).

Threonine 58–threonine 65 is a binding site for ATP.

The protein belongs to the LpxK family.

The enzyme catalyses a lipid A disaccharide + ATP = a lipid IVA + ADP + H(+). Its pathway is glycolipid biosynthesis; lipid IV(A) biosynthesis; lipid IV(A) from (3R)-3-hydroxytetradecanoyl-[acyl-carrier-protein] and UDP-N-acetyl-alpha-D-glucosamine: step 6/6. In terms of biological role, transfers the gamma-phosphate of ATP to the 4'-position of a tetraacyldisaccharide 1-phosphate intermediate (termed DS-1-P) to form tetraacyldisaccharide 1,4'-bis-phosphate (lipid IVA). The sequence is that of Tetraacyldisaccharide 4'-kinase from Shewanella baltica (strain OS195).